Here is a 355-residue protein sequence, read N- to C-terminus: Galectin-9 (355 aa).

2 Galectin domains span residues 17–148 (FSGT…ISFQ) and 227–355 (FITT…HVQT). Residues Asn48, His61, Arg65, Asn75, 82–88 (WGPEERK), His267, Arg271, Thr281, and 287–293 (WGSEERS) contribute to the a beta-D-galactoside site.

As to quaternary structure, monomer. As to expression, peripheral blood leukocytes and lymphatic tissues. Expressed in lung, liver, breast and kidney with higher levels in tumor endothelial cells than normal endothelium (at protein level). Expressed in trophoblast cells in decidua and placenta in pregnancy (at protein level). Isoform 2 is the most abundant isoform expressed in endothelial cells. Upon endothelial cell activation isoform 2 expression decreases while expression of isoform 3 and isoform 5 increases. Isoform 4 decreases in pathological pregnancy.

It is found in the cytoplasm. The protein resides in the nucleus. The protein localises to the secreted. Its function is as follows. Binds galactosides. Has high affinity for the Forssman pentasaccharide. Ligand for HAVCR2/TIM3. Binding to HAVCR2 induces T-helper type 1 lymphocyte (Th1) death. Also stimulates bactericidal activity in infected macrophages by causing macrophage activation and IL1B secretion which restricts intracellular bacterial growth. Ligand for P4HB; the interaction retains P4HB at the cell surface of Th2 T-helper cells, increasing disulfide reductase activity at the plasma membrane, altering the plasma membrane redox state and enhancing cell migration. Ligand for CD44; the interaction enhances binding of SMAD3 to the FOXP3 promoter, leading to up-regulation of FOXP3 expression and increased induced regulatory T (iTreg) cell stability and suppressive function. Promotes ability of mesenchymal stromal cells to suppress T-cell proliferation. Expands regulatory T-cells and induces cytotoxic T-cell apoptosis following virus infection. Activates ERK1/2 phosphorylation inducing cytokine (IL-6, IL-8, IL-12) and chemokine (CCL2) production in mast and dendritic cells. Inhibits degranulation and induces apoptosis of mast cells. Induces maturation and migration of dendritic cells. Inhibits natural killer (NK) cell function. Can transform NK cell phenotype from peripheral to decidual during pregnancy. Astrocyte derived galectin-9 enhances microglial TNF production. May play a role in thymocyte-epithelial interactions relevant to the biology of the thymus. May provide the molecular basis for urate flux across cell membranes, allowing urate that is formed during purine metabolism to efflux from cells and serving as an electrogenic transporter that plays an important role in renal and gastrointestinal urate excretion. Highly selective to the anion urate. Acts as an eosinophil chemoattractant. It also inhibits angiogenesis. Suppresses IFNG production by natural killer cells. The protein is Galectin-9 (LGALS9) of Homo sapiens (Human).